We begin with the raw amino-acid sequence, 388 residues long: Succinate--CoA ligase [ADP-forming] subunit beta (388 aa).

Positions 9–244 constitute an ATP-grasp domain; sequence KEILRKFGVA…LDEEDPAEIE (236 aa). ATP contacts are provided by residues Lys-46, 53 to 55, Glu-99, Ala-102, and Glu-107; that span reads GRG. Mg(2+)-binding residues include Asn-199 and Asp-213. Residues Asn-264 and 321-323 contribute to the substrate site; that span reads GIM.

This sequence belongs to the succinate/malate CoA ligase beta subunit family. In terms of assembly, heterotetramer of two alpha and two beta subunits. It depends on Mg(2+) as a cofactor.

It catalyses the reaction succinate + ATP + CoA = succinyl-CoA + ADP + phosphate. The catalysed reaction is GTP + succinate + CoA = succinyl-CoA + GDP + phosphate. The protein operates within carbohydrate metabolism; tricarboxylic acid cycle; succinate from succinyl-CoA (ligase route): step 1/1. In terms of biological role, succinyl-CoA synthetase functions in the citric acid cycle (TCA), coupling the hydrolysis of succinyl-CoA to the synthesis of either ATP or GTP and thus represents the only step of substrate-level phosphorylation in the TCA. The beta subunit provides nucleotide specificity of the enzyme and binds the substrate succinate, while the binding sites for coenzyme A and phosphate are found in the alpha subunit. The polypeptide is Succinate--CoA ligase [ADP-forming] subunit beta (Burkholderia mallei (strain NCTC 10247)).